We begin with the raw amino-acid sequence, 308 residues long: Oxygen-dependent coproporphyrinogen-III oxidase (308 aa).

A substrate-binding site is contributed by serine 100. The a divalent metal cation site is built by histidine 104 and histidine 114. Catalysis depends on histidine 114, which acts as the Proton donor. 116 to 118 (NFR) lines the substrate pocket. Residues histidine 153 and histidine 183 each coordinate a divalent metal cation. Positions 248–283 (YVEFNLVFDRGTIFGLQSGGRTESILSSMPPMASWR) are important for dimerization. Residue 266–268 (GGR) participates in substrate binding.

The protein belongs to the aerobic coproporphyrinogen-III oxidase family. In terms of assembly, homodimer. It depends on a divalent metal cation as a cofactor.

It is found in the cytoplasm. The enzyme catalyses coproporphyrinogen III + O2 + 2 H(+) = protoporphyrinogen IX + 2 CO2 + 2 H2O. The protein operates within porphyrin-containing compound metabolism; protoporphyrin-IX biosynthesis; protoporphyrinogen-IX from coproporphyrinogen-III (O2 route): step 1/1. Functionally, involved in the heme biosynthesis. Catalyzes the aerobic oxidative decarboxylation of propionate groups of rings A and B of coproporphyrinogen-III to yield the vinyl groups in protoporphyrinogen-IX. The sequence is that of Oxygen-dependent coproporphyrinogen-III oxidase from Francisella tularensis subsp. novicida (strain U112).